The primary structure comprises 461 residues: Bifunctional protein HldE (461 aa).

Residues 1 to 311 are ribokinase; the sequence is MKKILVVGDL…EEIALILNQT (311 aa). 191 to 194 contacts ATP; that stretch reads NRAE. Asp-260 is an active-site residue. The cytidylyltransferase stretch occupies residues 332–461; that stretch reads FTNGCFDLLH…IEKIKRTHND (130 aa).

The protein in the N-terminal section; belongs to the carbohydrate kinase PfkB family. This sequence in the C-terminal section; belongs to the cytidylyltransferase family. As to quaternary structure, homodimer.

The enzyme catalyses D-glycero-beta-D-manno-heptose 7-phosphate + ATP = D-glycero-beta-D-manno-heptose 1,7-bisphosphate + ADP + H(+). It carries out the reaction D-glycero-beta-D-manno-heptose 1-phosphate + ATP + H(+) = ADP-D-glycero-beta-D-manno-heptose + diphosphate. It functions in the pathway nucleotide-sugar biosynthesis; ADP-L-glycero-beta-D-manno-heptose biosynthesis; ADP-L-glycero-beta-D-manno-heptose from D-glycero-beta-D-manno-heptose 7-phosphate: step 1/4. It participates in nucleotide-sugar biosynthesis; ADP-L-glycero-beta-D-manno-heptose biosynthesis; ADP-L-glycero-beta-D-manno-heptose from D-glycero-beta-D-manno-heptose 7-phosphate: step 3/4. Its function is as follows. Catalyzes the phosphorylation of D-glycero-D-manno-heptose 7-phosphate at the C-1 position to selectively form D-glycero-beta-D-manno-heptose-1,7-bisphosphate. In terms of biological role, catalyzes the ADP transfer from ATP to D-glycero-beta-D-manno-heptose 1-phosphate, yielding ADP-D-glycero-beta-D-manno-heptose. The polypeptide is Bifunctional protein HldE (Helicobacter pylori (strain P12)).